We begin with the raw amino-acid sequence, 408 residues long: NADH-quinone oxidoreductase subunit D (408 aa).

Belongs to the complex I 49 kDa subunit family. As to quaternary structure, NDH-1 is composed of 14 different subunits. Subunits NuoB, C, D, E, F, and G constitute the peripheral sector of the complex.

The protein resides in the cell inner membrane. It carries out the reaction a quinone + NADH + 5 H(+)(in) = a quinol + NAD(+) + 4 H(+)(out). Functionally, NDH-1 shuttles electrons from NADH, via FMN and iron-sulfur (Fe-S) centers, to quinones in the respiratory chain. The immediate electron acceptor for the enzyme in this species is believed to be ubiquinone. Couples the redox reaction to proton translocation (for every two electrons transferred, four hydrogen ions are translocated across the cytoplasmic membrane), and thus conserves the redox energy in a proton gradient. The protein is NADH-quinone oxidoreductase subunit D of Wolinella succinogenes (strain ATCC 29543 / DSM 1740 / CCUG 13145 / JCM 31913 / LMG 7466 / NCTC 11488 / FDC 602W) (Vibrio succinogenes).